A 928-amino-acid polypeptide reads, in one-letter code: MTYFLNDIRPPSPNDITPSFTLLTKELFDKLDGVRKESLGDFRTVTEKKAFIIKTFINTFRTHIGNDIYPSAKLIFPEKSGRIYFIKEVALARLLIKMYKIPKESEDYITLHDWNKSYQRSRRFSIDEKKIRDLPLQASRIISKRRPIVDKLEEYTVPQINSSLDQLALEKVSQGQIDILKPLFDNLSIPEVRWLIHILLNKSILTSMERFFFNTWHPDGYRVFSICNDLQKTLQFSTNPDLRLDPSQLAIHPCFKFKPQLSERLTTSYKTLVKKLQRKHEMDPPYEKKFQELGLENKFYIEEKMDGDRMLLHKDGDSFKFFSRRLKDYSYLYGESFQFGALTKFLAHAFAGNIQSVILDGEMVAYDYERNVILPFGTLKSSAIQESVRQFTTIDQYEQQTAYPFFLVFDILFLNGKDLTNYPLFFRKNILNRILRPIPNRFEVLDTRLGSSSEDIERAIREVVSSRCEGLVLKNVQSKYEIDGFRNPDWIKVKPEYLEKFGENLDLVVIGKSPAIKNSYMCGLKSVTDGVYYSFCTCANGIEIEEFDKIERLTHGKWIKTDVSMPPESLIKFGTKIPTFWIHPSDSLVLEIRARSIDTRAGTSYAVGSTLHNNHCRKIREDKSIDECVTLQEYTHIKANYINDLNKAQTALGKKREPVYSLDNESKLKKVKVESDLFSGIEFLIMSDKREADGEVTTIEEMKAMVKQYGGKIVNSVDLATNYQIMVITERELPVSSQYLSKGIDLVKPIWIYECIKRGCVLQLEPYFIFASKNWDNFNHMVDQYGDSYIIHHPLNIVVPKLSESELEDLRNGFDWGDLKPWIYLFKGLSFYVCGNNLSARFLKERIERFSGDLSKHFIECCYIVIPDNHSRPLMLREIDKMSNQISREMVIDKNGGSSRIPHFVTEAFVQASIKMNYIPDPDDYKFR.

The ATP site is built by glutamate 302, lysine 304, arginine 309, glutamate 362, phenylalanine 409, glutamate 469, lysine 474, lysine 492, and lysine 494. Residue lysine 304 is the N6-AMP-lysine intermediate of the active site. Position 362 (glutamate 362) interacts with Mg(2+). Glutamate 469 serves as a coordination point for Mg(2+). 2 consecutive BRCT domains span residues 673-769 and 821-927; these read VESD…PYFI and PWIY…DYKF.

The protein belongs to the ATP-dependent DNA ligase family. The cofactor is Mg(2+).

It is found in the nucleus. It catalyses the reaction ATP + (deoxyribonucleotide)n-3'-hydroxyl + 5'-phospho-(deoxyribonucleotide)m = (deoxyribonucleotide)n+m + AMP + diphosphate.. In terms of biological role, DNA ligase involved in DNA non-homologous end joining (NHEJ); required for double-strand break (DSB) repair. Not required for the repair of DSBs induced by ionizing radiation or UV light. Has an important role in morphogenesis, positively affecting the capacity to form hyphae. The polypeptide is DNA ligase 4 (LIG4) (Candida albicans (strain SC5314 / ATCC MYA-2876) (Yeast)).